A 144-amino-acid polypeptide reads, in one-letter code: Noggin (144 aa).

Positions 1 to 4 (GGGG) are cleaved as a signal peptide. 4 disulfide bridges follow: C67-C104, C90-C140, C96-C142, and C119-C127.

Belongs to the noggin family. Homodimer. Interacts with GDF5; inhibits chondrocyte differentiation. In terms of tissue distribution, prominently expressed in the CNS. High levels found in mitral and tufted cells in the olfactory bulb, piriform cortex of the brain and Purkinje cells in the cerebellum. Low level expression seen in the lung, skeletal muscle and skin.

The protein localises to the secreted. Its function is as follows. Essential for cartilage morphogenesis and joint formation. Inhibitor of bone morphogenetic proteins (BMP) signaling which is required for growth and patterning of the neural tube and somite. Inhibits chondrocyte differentiation through its interaction with GDF5 and, probably, GDF6. The polypeptide is Noggin (Nog) (Rattus norvegicus (Rat)).